Consider the following 341-residue polypeptide: Cell division protein FtsQ (341 aa).

The Cytoplasmic portion of the chain corresponds to 1–126; it reads MTETDEGAPV…VARGVVRGLK (126 aa). The chain crosses the membrane as a helical span at residues 127-147; it reads TLFATVMFSIAGFGLGLALYV. At 148–341 the chain is on the extracellular side; the sequence is TPAMSVRNIV…VSSPDLPTVK (194 aa). The region spanning 151 to 219 is the POTRA domain; that stretch reads MSVRNIVVTG…SALRITIVER (69 aa).

Belongs to the FtsQ/DivIB family. FtsQ subfamily.

The protein resides in the cell membrane. In terms of biological role, essential cell division protein. The chain is Cell division protein FtsQ from Mycobacterium leprae (strain Br4923).